Reading from the N-terminus, the 2512-residue chain is Fatty acid synthase (2512 aa).

At E2 the chain carries N-acetylglutamate. Residues 2 to 406 (EDVVIAGIAG…GSNAHVILRP (405 aa)) enclose the Ketosynthase family 3 (KS3) domain. Catalysis depends on for beta-ketoacyl synthase activity residues C161, H293, and H331. Residues 427–815 (GRTQEAVEIL…GINVLGNNLF (389 aa)) are acyl and malonyl transferases. The active-site For acyl/malonyl transferase activity is the S580. An acyl-CoA contacts are provided by residues 646-647 (DT), F670, and R772. Residues 844–967 (PKAEDFPSGS…ISLLENDALK (124 aa)) form an N-terminal hotdog fold region. A PKS/mFAS DH domain is found at 844 to 1111 (PKAEDFPSGS…ASVAPRRQQE (268 aa)). H878 acts as the Proton acceptor; for dehydratase activity in catalysis. The C-terminal hotdog fold stretch occupies residues 984 to 1111 (AKSGLLMEDV…ASVAPRRQQE (128 aa)). The active-site Proton donor; for dehydratase activity is the D1034. At C1475 the chain carries S-nitrosocysteine. The segment at 1638-1866 (WEVPENWTLE…MIKIQEEEKQ (229 aa)) is enoyl reductase. 1675–1692 (VLIHSGSGGVGQAAIAIA) lines the NADP(+) pocket. K1708 carries the post-translational modification N6-(pyridoxal phosphate)lysine. The tract at residues 1867–2119 (YPLRSEPVKL…SFVLAEKVSV (253 aa)) is beta-ketoacyl reductase. Residue 1889–1904 (SYIITGGLGGFGLELA) participates in NADP(+) binding. C2093 carries the S-nitrosocysteine modification. Residues 2120-2200 (KSEGGSQRDL…ELSSKTGTAE (81 aa)) enclose the Carrier domain. S2158 carries the post-translational modification O-(pantetheine 4'-phosphoryl)serine. The tract at residues 2209 to 2511 (KTGPGEPPKL…LAEPRVSVRE (303 aa)) is thioesterase. Catalysis depends on for thioesterase activity residues S2309 and H2482.

As to quaternary structure, homodimer which is arranged in a head to tail fashion. S-nitrosylation of Fatty acid synthase at cysteine residues Cys-1475 or Cys-2093 is important for the enzyme dimerization. In adipocytes, S-nitrosylation of Fatty acid synthase occurs under physiological conditions and gradually increases during adipogenesis.

It carries out the reaction acetyl-CoA + n malonyl-CoA + 2n NADPH + 2n H(+) = a long-chain fatty acid + (n+1) CoA + n CO2 + 2n NADP(+).. The enzyme catalyses holo-[ACP] + acetyl-CoA = acetyl-[ACP] + CoA. It catalyses the reaction holo-[ACP] + malonyl-CoA = malonyl-[ACP] + CoA. The catalysed reaction is a fatty acyl-[ACP] + malonyl-[ACP] + H(+) = a 3-oxoacyl-[ACP] + holo-[ACP] + CO2. It carries out the reaction a (3R)-hydroxyacyl-[ACP] + NADP(+) = a 3-oxoacyl-[ACP] + NADPH + H(+). The enzyme catalyses a (3R)-hydroxyacyl-[ACP] = a (2E)-enoyl-[ACP] + H2O. It catalyses the reaction a 2,3-saturated acyl-[ACP] + NADP(+) = a (2E)-enoyl-[ACP] + NADPH + H(+). The catalysed reaction is hexadecanoyl-[ACP] + H2O = hexadecanoate + holo-[ACP] + H(+). It carries out the reaction acetyl-[ACP] + malonyl-[ACP] + H(+) = 3-oxobutanoyl-[ACP] + holo-[ACP] + CO2. The enzyme catalyses 3-oxobutanoyl-[ACP] + NADPH + H(+) = (3R)-hydroxybutanoyl-[ACP] + NADP(+). It catalyses the reaction (3R)-hydroxybutanoyl-[ACP] = (2E)-butenoyl-[ACP] + H2O. The catalysed reaction is (2E)-butenoyl-[ACP] + NADPH + H(+) = butanoyl-[ACP] + NADP(+). It carries out the reaction butanoyl-[ACP] + malonyl-[ACP] + H(+) = 3-oxohexanoyl-[ACP] + holo-[ACP] + CO2. The enzyme catalyses 3-oxohexanoyl-[ACP] + NADPH + H(+) = (3R)-hydroxyhexanoyl-[ACP] + NADP(+). It catalyses the reaction (3R)-hydroxyhexanoyl-[ACP] = (2E)-hexenoyl-[ACP] + H2O. The catalysed reaction is (2E)-hexenoyl-[ACP] + NADPH + H(+) = hexanoyl-[ACP] + NADP(+). It carries out the reaction hexanoyl-[ACP] + malonyl-[ACP] + H(+) = 3-oxooctanoyl-[ACP] + holo-[ACP] + CO2. The enzyme catalyses 3-oxooctanoyl-[ACP] + NADPH + H(+) = (3R)-hydroxyoctanoyl-[ACP] + NADP(+). It catalyses the reaction (3R)-hydroxyoctanoyl-[ACP] = (2E)-octenoyl-[ACP] + H2O. The catalysed reaction is (2E)-octenoyl-[ACP] + NADPH + H(+) = octanoyl-[ACP] + NADP(+). It carries out the reaction octanoyl-[ACP] + malonyl-[ACP] + H(+) = 3-oxodecanoyl-[ACP] + holo-[ACP] + CO2. The enzyme catalyses 3-oxodecanoyl-[ACP] + NADPH + H(+) = (3R)-hydroxydecanoyl-[ACP] + NADP(+). It catalyses the reaction (3R)-hydroxydecanoyl-[ACP] = (2E)-decenoyl-[ACP] + H2O. The catalysed reaction is (2E)-decenoyl-[ACP] + NADPH + H(+) = decanoyl-[ACP] + NADP(+). It carries out the reaction decanoyl-[ACP] + malonyl-[ACP] + H(+) = 3-oxododecanoyl-[ACP] + holo-[ACP] + CO2. The enzyme catalyses 3-oxododecanoyl-[ACP] + NADPH + H(+) = (3R)-hydroxydodecanoyl-[ACP] + NADP(+). It catalyses the reaction (3R)-hydroxydodecanoyl-[ACP] = (2E)-dodecenoyl-[ACP] + H2O. The catalysed reaction is (2E)-dodecenoyl-[ACP] + NADPH + H(+) = dodecanoyl-[ACP] + NADP(+). It carries out the reaction dodecanoyl-[ACP] + malonyl-[ACP] + H(+) = 3-oxotetradecanoyl-[ACP] + holo-[ACP] + CO2. The enzyme catalyses 3-oxotetradecanoyl-[ACP] + NADPH + H(+) = (3R)-hydroxytetradecanoyl-[ACP] + NADP(+). It catalyses the reaction (3R)-hydroxytetradecanoyl-[ACP] = (2E)-tetradecenoyl-[ACP] + H2O. The catalysed reaction is (2E)-tetradecenoyl-[ACP] + NADPH + H(+) = tetradecanoyl-[ACP] + NADP(+). It carries out the reaction tetradecanoyl-[ACP] + malonyl-[ACP] + H(+) = 3-oxohexadecanoyl-[ACP] + holo-[ACP] + CO2. The enzyme catalyses 3-oxohexadecanoyl-[ACP] + NADPH + H(+) = (3R)-hydroxyhexadecanoyl-[ACP] + NADP(+). It catalyses the reaction (3R)-hydroxyhexadecanoyl-[ACP] = (2E)-hexadecenoyl-[ACP] + H2O. The catalysed reaction is (2E)-hexadecenoyl-[ACP] + NADPH + H(+) = hexadecanoyl-[ACP] + NADP(+). It carries out the reaction hexadecanoyl-[ACP] + malonyl-[ACP] + H(+) = 3-oxooctadecanoyl-[ACP] + holo-[ACP] + CO2. The enzyme catalyses 3-oxooctadecanoyl-[ACP] + NADPH + H(+) = (3R)-hydroxyoctadecanoyl-[ACP] + NADP(+). It catalyses the reaction (3R)-hydroxyoctadecanoyl-[ACP] = (2E)-octadecenoyl-[ACP] + H2O. The catalysed reaction is (2E)-octadecenoyl-[ACP] + NADPH + H(+) = octadecanoyl-[ACP] + NADP(+). It carries out the reaction tetradecanoyl-[ACP] + H2O = tetradecanoate + holo-[ACP] + H(+). The enzyme catalyses octadecanoyl-[ACP] + H2O = octadecanoate + holo-[ACP] + H(+). The protein operates within lipid metabolism; fatty acid biosynthesis. With respect to regulation, cerulenin, a potent non-competitive pharmacological inhibitor of FAS, binds covalently to the active site of the condensing enzyme region, inactivating a key enzyme step in fatty acid synthesis. Functionally, fatty acid synthetase is a multifunctional enzyme that catalyzes the de novo biosynthesis of long-chain saturated fatty acids starting from acetyl-CoA and malonyl-CoA in the presence of NADPH. This multifunctional protein contains 7 catalytic activities and a site for the binding of the prosthetic group 4'-phosphopantetheine of the acyl carrier protein ([ACP]) domain. This is Fatty acid synthase (FASN) from Gallus gallus (Chicken).